Reading from the N-terminus, the 1203-residue chain is DNA-directed RNA polymerase subunit beta' (1203 aa).

Residues Cys60, Cys62, Cys75, and Cys78 each coordinate Zn(2+). 3 residues coordinate Mg(2+): Asp449, Asp451, and Asp453. Zn(2+) contacts are provided by Cys818, Cys892, Cys899, and Cys902.

This sequence belongs to the RNA polymerase beta' chain family. The RNAP catalytic core consists of 2 alpha, 1 beta, 1 beta' and 1 omega subunit. When a sigma factor is associated with the core the holoenzyme is formed, which can initiate transcription. Requires Mg(2+) as cofactor. The cofactor is Zn(2+).

It catalyses the reaction RNA(n) + a ribonucleoside 5'-triphosphate = RNA(n+1) + diphosphate. Its function is as follows. DNA-dependent RNA polymerase catalyzes the transcription of DNA into RNA using the four ribonucleoside triphosphates as substrates. This Bacillus mycoides (strain KBAB4) (Bacillus weihenstephanensis) protein is DNA-directed RNA polymerase subunit beta'.